The chain runs to 320 residues: Minor outer capsid protein P9 (320 aa).

The tract at residues 297–320 (RNDDEEELAGSEFTSLLSDDGRMG) is disordered.

The protein belongs to the phytoreovirus minor outer capsid protein P9 family.

It is found in the virion. The protein resides in the host cytoplasm. Functionally, minor outer capsid protein. In Rice gall dwarf virus (RGDV), this protein is Minor outer capsid protein P9.